The primary structure comprises 876 residues: Translation initiation factor IF-2 (876 aa).

The region spanning 378 to 547 (TRPPIITIMG…LTQSEMLELK (170 aa)) is the tr-type G domain. The interval 387–394 (GHVDHGKT) is G1. Residue 387–394 (GHVDHGKT) participates in GTP binding. Residues 412-416 (RITQH) are G2. The G3 stretch occupies residues 433–436 (DTPG). GTP-binding positions include 433-437 (DTPGH) and 487-490 (NKID). Residues 487-490 (NKID) form a G4 region. The tract at residues 523–525 (SAK) is G5.

Belongs to the TRAFAC class translation factor GTPase superfamily. Classic translation factor GTPase family. IF-2 subfamily.

Its subcellular location is the cytoplasm. Its function is as follows. One of the essential components for the initiation of protein synthesis. Protects formylmethionyl-tRNA from spontaneous hydrolysis and promotes its binding to the 30S ribosomal subunits. Also involved in the hydrolysis of GTP during the formation of the 70S ribosomal complex. The sequence is that of Translation initiation factor IF-2 from Buchnera aphidicola subsp. Baizongia pistaciae (strain Bp).